A 184-amino-acid chain; its full sequence is Elongation factor P (184 aa).

The protein belongs to the elongation factor P family.

The protein localises to the cytoplasm. The protein operates within protein biosynthesis; polypeptide chain elongation. In terms of biological role, involved in peptide bond synthesis. Stimulates efficient translation and peptide-bond synthesis on native or reconstituted 70S ribosomes in vitro. Probably functions indirectly by altering the affinity of the ribosome for aminoacyl-tRNA, thus increasing their reactivity as acceptors for peptidyl transferase. The polypeptide is Elongation factor P (Albidiferax ferrireducens (strain ATCC BAA-621 / DSM 15236 / T118) (Rhodoferax ferrireducens)).